Consider the following 217-residue polypeptide: Dephospho-CoA kinase (217 aa).

One can recognise a DPCK domain in the interval 2–217 (VIGLTGGIAS…RELARIEEQK (216 aa)). Residue 10–15 (ASGKST) participates in ATP binding.

This sequence belongs to the CoaE family.

Its subcellular location is the cytoplasm. It catalyses the reaction 3'-dephospho-CoA + ATP = ADP + CoA + H(+). It functions in the pathway cofactor biosynthesis; coenzyme A biosynthesis; CoA from (R)-pantothenate: step 5/5. Functionally, catalyzes the phosphorylation of the 3'-hydroxyl group of dephosphocoenzyme A to form coenzyme A. The protein is Dephospho-CoA kinase of Lactococcus lactis subsp. lactis (strain IL1403) (Streptococcus lactis).